The sequence spans 179 residues: Large ribosomal subunit protein uL5 (179 aa).

The protein belongs to the universal ribosomal protein uL5 family. Part of the 50S ribosomal subunit; part of the 5S rRNA/L5/L18/L25 subcomplex. Contacts the 5S rRNA and the P site tRNA. Forms a bridge to the 30S subunit in the 70S ribosome.

In terms of biological role, this is one of the proteins that bind and probably mediate the attachment of the 5S RNA into the large ribosomal subunit, where it forms part of the central protuberance. In the 70S ribosome it contacts protein S13 of the 30S subunit (bridge B1b), connecting the 2 subunits; this bridge is implicated in subunit movement. Contacts the P site tRNA; the 5S rRNA and some of its associated proteins might help stabilize positioning of ribosome-bound tRNAs. This Lachnoclostridium phytofermentans (strain ATCC 700394 / DSM 18823 / ISDg) (Clostridium phytofermentans) protein is Large ribosomal subunit protein uL5.